The chain runs to 410 residues: MAREKFERKKPHVNIGTIGHVDHGKTTLTAAITMALAASTGAKGKRYDEIDAAPEERARGITINTAHVEYETEKRHYAHVDCPGHADYVKNMITGAAQMDGAILVVSGADGPMPQTKEHILLAKQVGVPNVVVFLNKEDQVDDAELLELVELEVRETLSDYDFPGDEVPVVAGSALLALESLTQNPKIVKGENKWVDKIYSLMDQVDAYIPTPERDTDKPFLMAVEDVFSITGRGTVATGRVERGTVKVGEAIEIVGLREAPVTSIVTGLEMFQKTLEESVAGDNVGILLRGIQKKDIERGMVLAKPGTIKPHKSFEAQVYILNKEEGGRHTPFFQGYRPQFYVRTTDVTGKIESFQADDGSETQMVMPGDRIKMVVQLIQPIAIEKGMRFAIREGGRTVGAGVVFNILE.

Positions 10–214 (KPHVNIGTIG…QVDAYIPTPE (205 aa)) constitute a tr-type G domain. Positions 19–26 (GHVDHGKT) are G1. 19-26 (GHVDHGKT) provides a ligand contact to GTP. A Mg(2+)-binding site is contributed by Thr26. The interval 60-64 (GITIN) is G2. The interval 81-84 (DCPG) is G3. GTP-binding positions include 81–85 (DCPGH) and 136–139 (NKED). Residues 136 to 139 (NKED) form a G4 region. Residues 174-176 (SAL) form a G5 region.

Belongs to the TRAFAC class translation factor GTPase superfamily. Classic translation factor GTPase family. EF-Tu/EF-1A subfamily.

Its subcellular location is the plastid. The protein resides in the chloroplast. It carries out the reaction GTP + H2O = GDP + phosphate + H(+). Functionally, GTP hydrolase that promotes the GTP-dependent binding of aminoacyl-tRNA to the A-site of ribosomes during protein biosynthesis. This Chlorokybus atmophyticus (Soil alga) protein is Elongation factor Tu, chloroplastic (tufA).